Consider the following 596-residue polypeptide: Chaperone protein DnaK (596 aa).

Thr180 bears the Phosphothreonine; by autocatalysis mark.

Belongs to the heat shock protein 70 family.

Acts as a chaperone. The sequence is that of Chaperone protein DnaK from Thermotoga neapolitana (strain ATCC 49049 / DSM 4359 / NBRC 107923 / NS-E).